The primary structure comprises 336 residues: Glyceraldehyde-3-phosphate dehydrogenase (336 aa).

NAD(+) is bound by residues 12 to 13, aspartate 34, arginine 78, and threonine 121; that span reads RI. Residues 151–153, threonine 182, arginine 199, 212–213, and arginine 235 contribute to the D-glyceraldehyde 3-phosphate site; these read SCT and TG. The active-site Nucleophile is cysteine 152. Asparagine 316 provides a ligand contact to NAD(+).

The protein belongs to the glyceraldehyde-3-phosphate dehydrogenase family. In terms of assembly, homotetramer.

It localises to the cytoplasm. The catalysed reaction is D-glyceraldehyde 3-phosphate + phosphate + NAD(+) = (2R)-3-phospho-glyceroyl phosphate + NADH + H(+). The protein operates within carbohydrate degradation; glycolysis; pyruvate from D-glyceraldehyde 3-phosphate: step 1/5. Its function is as follows. Also binds human plasminogen. Catalyzes the oxidative phosphorylation of glyceraldehyde 3-phosphate (G3P) to 1,3-bisphosphoglycerate (BPG) using the cofactor NAD. The first reaction step involves the formation of a hemiacetal intermediate between G3P and a cysteine residue, and this hemiacetal intermediate is then oxidized to a thioester, with concomitant reduction of NAD to NADH. The reduced NADH is then exchanged with the second NAD, and the thioester is attacked by a nucleophilic inorganic phosphate to produce BPG. This chain is Glyceraldehyde-3-phosphate dehydrogenase (gap), found in Streptococcus pyogenes.